We begin with the raw amino-acid sequence, 248 residues long: Adenosylcobinamide-GDP ribazoletransferase (248 aa).

The next 7 helical transmembrane spans lie at 32-52 (FPLV…IGMV), 60-80 (ALLV…DGLA), 103-123 (AVGS…WIAL), 134-154 (WIVS…SVMT), 170-190 (AGGW…VLVM), 195-215 (LPIV…GMLA), and 227-247 (LGAS…LLLF).

Belongs to the CobS family. Requires Mg(2+) as cofactor.

The protein localises to the cell inner membrane. The enzyme catalyses alpha-ribazole + adenosylcob(III)inamide-GDP = adenosylcob(III)alamin + GMP + H(+). It catalyses the reaction alpha-ribazole 5'-phosphate + adenosylcob(III)inamide-GDP = adenosylcob(III)alamin 5'-phosphate + GMP + H(+). It participates in cofactor biosynthesis; adenosylcobalamin biosynthesis; adenosylcobalamin from cob(II)yrinate a,c-diamide: step 7/7. Functionally, joins adenosylcobinamide-GDP and alpha-ribazole to generate adenosylcobalamin (Ado-cobalamin). Also synthesizes adenosylcobalamin 5'-phosphate from adenosylcobinamide-GDP and alpha-ribazole 5'-phosphate. In Prosthecochloris aestuarii (strain DSM 271 / SK 413), this protein is Adenosylcobinamide-GDP ribazoletransferase.